The primary structure comprises 61 residues: Large ribosomal subunit protein bL32 (61 aa).

The interval 1-20 is disordered; sequence MAVQKSKPSRAKRGKRRSHD. Residues 7–19 show a composition bias toward basic residues; the sequence is KPSRAKRGKRRSH.

Belongs to the bacterial ribosomal protein bL32 family.

The protein is Large ribosomal subunit protein bL32 of Buchnera aphidicola subsp. Cinara cedri (strain Cc).